The sequence spans 147 residues: Transthyretin (147 aa).

An N-terminal signal peptide occupies residues 1-20 (MASRRLLLLCLAGLVLVTEA). Cys30 bears the Sulfocysteine mark. L-thyroxine is bound at residue Lys35. Position 62 is a 4-carboxyglutamate (Glu62). L-thyroxine is bound at residue Glu74. Asn118 carries an N-linked (GlcNAc...) asparagine glycan. Ser137 is an L-thyroxine binding site.

It belongs to the transthyretin family. Homotetramer. Dimer of dimers. In the homotetramer, subunits assemble around a central channel that can accommodate two ligand molecules. Interacts with RBP4. Sulfonation of the reactive cysteine Cys-30 enhances the stability of the native conformation of TTR, avoiding misassembly of the protein leading to amyloid formation. In terms of tissue distribution, detected in serum (at protein level). Detected in liver.

It is found in the secreted. In terms of biological role, thyroid hormone-binding protein. Probably transports thyroxine from the bloodstream to the brain. This is Transthyretin (TTR) from Sorex araneus (Eurasian common shrew).